The following is a 356-amino-acid chain: Histidinol-phosphate aminotransferase (356 aa).

Residue Lys214 is modified to N6-(pyridoxal phosphate)lysine.

This sequence belongs to the class-II pyridoxal-phosphate-dependent aminotransferase family. Histidinol-phosphate aminotransferase subfamily. As to quaternary structure, homodimer. The cofactor is pyridoxal 5'-phosphate.

It catalyses the reaction L-histidinol phosphate + 2-oxoglutarate = 3-(imidazol-4-yl)-2-oxopropyl phosphate + L-glutamate. Its pathway is amino-acid biosynthesis; L-histidine biosynthesis; L-histidine from 5-phospho-alpha-D-ribose 1-diphosphate: step 7/9. This is Histidinol-phosphate aminotransferase from Escherichia coli O127:H6 (strain E2348/69 / EPEC).